The sequence spans 227 residues: Cleavage and polyadenylation specificity factor subunit 5 (227 aa).

The residue at position 2 (serine 2) is an N-acetylserine. Residues 2–147 (SVVPPNRSQT…DWVIDDCIGN (146 aa)) are necessary for RNA-binding. Arginine 15 is subject to Omega-N-methylarginine. Residues lysine 23 and lysine 29 each carry the N6-acetyllysine modification. Residue tyrosine 40 is modified to Phosphotyrosine. Residue lysine 56 is modified to N6-acetyllysine. One can recognise a Nudix hydrolase domain in the interval 76-201 (MRRTVEGVLI…KLVAAPLFEL (126 aa)). The necessary for interactions with PAPOLA and PABPN1 stretch occupies residues 81–160 (EGVLIVHEHR…PNFEPPQYPY (80 aa)). Residues 102-104 (TFF) form an interaction with RNA region. The Nudix box signature appears at 109–130 (GELNPGEDEVEGLKRLMTEILG).

This sequence belongs to the Nudix hydrolase family. CPSF5 subfamily. Homodimer (via N- and C-terminus); binds RNA as homodimer. Component of the cleavage factor Im (CFIm) complex which is a heterotetramer composed of two subunits of NUDT21/CPSF5 and two subunits of CPSF6 or CPSF7 or a heterodimer of CPSF6 and CPSF7. The cleavage factor Im (CFIm) complex associates with the CPSF and CSTF complexes to promote the assembly of the core mRNA 3'-processing machinery. Interacts with CPSF6 (via the RRM domain); this interaction is direct and enhances binding to RNA. Interacts with CPSF7. Interacts with FIP1L1; this interaction occurs in a RNA sequence-specific manner. Interacts with PABPN1. Interacts (via N-terminus) with PAPOLA (via C-terminus); this interaction is direct and diminished by acetylation. Interacts with SNRNP70. Interacts with VIRMA. Acetylated mainly by p300/CBP, recruited to the complex by CPSF6. Acetylation decreases interaction with PAPAO. Deacetylated by the class I/II HDACs, HDAC1, HDAC3 and HDAC10, and by the class III HDACs, SIRT1 and SIRT2. As to expression, expressed in testis. Expressed in male germ cells (at protein level).

Its subcellular location is the nucleus. The protein localises to the cytoplasm. Functionally, component of the cleavage factor Im (CFIm) complex that functions as an activator of the pre-mRNA 3'-end cleavage and polyadenylation processing required for the maturation of pre-mRNA into functional mRNAs. CFIm contributes to the recruitment of multiprotein complexes on specific sequences on the pre-mRNA 3'-end, so called cleavage and polyadenylation signals (pA signals). Most pre-mRNAs contain multiple pA signals, resulting in alternative cleavage and polyadenylation (APA) producing mRNAs with variable 3'-end formation. The CFIm complex acts as a key regulator of cleavage and polyadenylation site choice during APA through its binding to 5'-UGUA-3' elements localized in the 3'-untranslated region (UTR) for a huge number of pre-mRNAs. NUDT21/CPSF5 activates indirectly the mRNA 3'-processing machinery by recruiting CPSF6 and/or CPSF7. Binds to 5'-UGUA-3' elements localized upstream of pA signals that act as enhancers of pre-mRNA 3'-end processing. The homodimer mediates simultaneous sequence-specific recognition of two 5'-UGUA-3' elements within the pre-mRNA. Plays a role in somatic cell fate transitions and pluripotency by regulating widespread changes in gene expression through an APA-dependent function. Binds to chromatin. Binds to, but does not hydrolyze mono- and di-adenosine nucleotides. This Mus musculus (Mouse) protein is Cleavage and polyadenylation specificity factor subunit 5.